A 1465-amino-acid chain; its full sequence is DNA polymerase III PolC-type (1465 aa).

The Exonuclease domain occupies 427–583 (YVVFDVETTG…YDAEATGRLL (157 aa)).

Belongs to the DNA polymerase type-C family. PolC subfamily.

The protein localises to the cytoplasm. The enzyme catalyses DNA(n) + a 2'-deoxyribonucleoside 5'-triphosphate = DNA(n+1) + diphosphate. In terms of biological role, required for replicative DNA synthesis. This DNA polymerase also exhibits 3' to 5' exonuclease activity. This Streptococcus pyogenes serotype M6 (strain ATCC BAA-946 / MGAS10394) protein is DNA polymerase III PolC-type.